The chain runs to 459 residues: UDP-N-acetylmuramate--L-alanine ligase (459 aa).

Residue 113–119 coordinates ATP; it reads GSHGKTT.

The protein belongs to the MurCDEF family.

The protein localises to the cytoplasm. It catalyses the reaction UDP-N-acetyl-alpha-D-muramate + L-alanine + ATP = UDP-N-acetyl-alpha-D-muramoyl-L-alanine + ADP + phosphate + H(+). It functions in the pathway cell wall biogenesis; peptidoglycan biosynthesis. Cell wall formation. This is UDP-N-acetylmuramate--L-alanine ligase from Persephonella marina (strain DSM 14350 / EX-H1).